Reading from the N-terminus, the 444-residue chain is Glycoprotein GX (444 aa).

The signal sequence occupies residues 1-24; that stretch reads MPAARTGTLAAVALILLCGAAVLG. N-linked (GlcNAc...) asparagine; by host glycans are attached at residues N117, N240, and N335. Residues 390–414 form a helical membrane-spanning segment; that stretch reads GILIGLAIALLVLLFSLVIVLVCAC.

Belongs to the herpesviridae glycoprotein G family.

The protein resides in the membrane. This Bos taurus (Bovine) protein is Glycoprotein GX.